A 191-amino-acid polypeptide reads, in one-letter code: Adenylate kinase (191 aa).

Position 10-15 (10-15 (AAGKGT)) interacts with ATP. The tract at residues 30 to 59 (STGDMLRAAIASGSELGQRVKGVLDRGELV) is NMP. AMP contacts are provided by residues threonine 31, arginine 36, 57–59 (ELV), 85–88 (GFPR), and glutamine 92. Positions 126–136 (KRFEEQGRPDD) are LID. Arginine 127 serves as a coordination point for ATP. Positions 133 and 144 each coordinate AMP. Position 172 (glycine 172) interacts with ATP.

This sequence belongs to the adenylate kinase family. Monomer.

Its subcellular location is the cytoplasm. The enzyme catalyses AMP + ATP = 2 ADP. The protein operates within purine metabolism; AMP biosynthesis via salvage pathway; AMP from ADP: step 1/1. Catalyzes the reversible transfer of the terminal phosphate group between ATP and AMP. Plays an important role in cellular energy homeostasis and in adenine nucleotide metabolism. In Caulobacter vibrioides (strain ATCC 19089 / CIP 103742 / CB 15) (Caulobacter crescentus), this protein is Adenylate kinase.